The sequence spans 695 residues: Probable glucan endo-1,3-beta-glucosidase btgC (695 aa).

4 disordered regions span residues 1–53 (MSGP…THHG), 117–140 (RRGT…GSDN), 175–258 (GPAG…RSQA), and 286–314 (ETSY…STGS). Residues 1-317 (MSGPHRTFSF…PKPSTGSRKR (317 aa)) are Cytoplasmic-facing. Polar residues predominate over residues 36 to 45 (PISNMSSSPG). Positions 188–198 (HLGTSNSSQRN) are enriched in polar residues. Positions 231–241 (NPEEIADDGDD) are enriched in acidic residues. A helical; Signal-anchor for type II membrane protein membrane pass occupies residues 318-338 (GWIIGAILAVIIIGAIVGGAV). At 339 to 695 (GGTIGHKDSG…IPDCGGKTAA (357 aa)) the chain is on the extracellular side. Positions 346–372 (DSGDSASGSSASTQSASGDTDTNGDLD) are disordered. Positions 349-366 (DSASGSSASTQSASGDTD) are enriched in low complexity. N-linked (GlcNAc...) asparagine glycans are attached at residues N415, N438, and N466. Catalysis depends on E498, which acts as the Proton donor. E597 functions as the Nucleophile in the catalytic mechanism. Residue N642 is glycosylated (N-linked (GlcNAc...) asparagine).

This sequence belongs to the glycosyl hydrolase 17 family.

It localises to the cell membrane. The enzyme catalyses Hydrolysis of (1-&gt;3)-beta-D-glucosidic linkages in (1-&gt;3)-beta-D-glucans.. Its function is as follows. Glucanases play a role in cell expansion during growth, in cell-cell fusion during mating, and in spore release during sporulation. This enzyme may be involved in beta-glucan degradation. Active on laminarin and lichenan. This chain is Probable glucan endo-1,3-beta-glucosidase btgC (btgC), found in Aspergillus clavatus (strain ATCC 1007 / CBS 513.65 / DSM 816 / NCTC 3887 / NRRL 1 / QM 1276 / 107).